A 177-amino-acid chain; its full sequence is Alkyl hydroperoxide reductase AhpD (177 aa).

Cysteine 131 serves as the catalytic Proton donor. Cysteine 131 and cysteine 134 are joined by a disulfide. Cysteine 134 functions as the Cysteine sulfenic acid (-SOH) intermediate in the catalytic mechanism.

It belongs to the AhpD family. Homotrimer.

It catalyses the reaction N(6)-[(R)-dihydrolipoyl]-L-lysyl-[lipoyl-carrier protein] + a hydroperoxide = N(6)-[(R)-lipoyl]-L-lysyl-[lipoyl-carrier protein] + an alcohol + H2O. Functionally, antioxidant protein with alkyl hydroperoxidase activity. Required for the reduction of the AhpC active site cysteine residues and for the regeneration of the AhpC enzyme activity. In Streptomyces griseus subsp. griseus (strain JCM 4626 / CBS 651.72 / NBRC 13350 / KCC S-0626 / ISP 5235), this protein is Alkyl hydroperoxide reductase AhpD.